Consider the following 427-residue polypeptide: 3-phosphoshikimate 1-carboxyvinyltransferase (427 aa).

3-phosphoshikimate contacts are provided by Lys20, Ser21, and Arg25. Residue Lys20 participates in phosphoenolpyruvate binding. Positions 92 and 120 each coordinate phosphoenolpyruvate. The 3-phosphoshikimate site is built by Ser166, Gln168, Asp312, and Lys339. Phosphoenolpyruvate is bound at residue Gln168. Asp312 acts as the Proton acceptor in catalysis. Phosphoenolpyruvate is bound by residues Arg343 and Arg385.

Belongs to the EPSP synthase family. As to quaternary structure, monomer.

It localises to the cytoplasm. The catalysed reaction is 3-phosphoshikimate + phosphoenolpyruvate = 5-O-(1-carboxyvinyl)-3-phosphoshikimate + phosphate. The protein operates within metabolic intermediate biosynthesis; chorismate biosynthesis; chorismate from D-erythrose 4-phosphate and phosphoenolpyruvate: step 6/7. In terms of biological role, catalyzes the transfer of the enolpyruvyl moiety of phosphoenolpyruvate (PEP) to the 5-hydroxyl of shikimate-3-phosphate (S3P) to produce enolpyruvyl shikimate-3-phosphate and inorganic phosphate. The polypeptide is 3-phosphoshikimate 1-carboxyvinyltransferase (Streptococcus pneumoniae (strain 70585)).